Here is a 669-residue protein sequence, read N- to C-terminus: Methionine--tRNA ligase (669 aa).

Residues 15–25 (PYANGPAHIGH) carry the 'HIGH' region motif. Positions 146, 149, 158, and 162 each coordinate Zn(2+). Positions 328-332 (KFSKS) match the 'KMSKS' region motif. Residue Lys331 coordinates ATP. The tRNA-binding domain occupies 570 to 669 (QFKALDLRVG…KEVPAGCGIR (100 aa)).

It belongs to the class-I aminoacyl-tRNA synthetase family. MetG type 1 subfamily. As to quaternary structure, homodimer. It depends on Zn(2+) as a cofactor.

Its subcellular location is the cytoplasm. The enzyme catalyses tRNA(Met) + L-methionine + ATP = L-methionyl-tRNA(Met) + AMP + diphosphate. Is required not only for elongation of protein synthesis but also for the initiation of all mRNA translation through initiator tRNA(fMet) aminoacylation. The sequence is that of Methionine--tRNA ligase from Methanothrix thermoacetophila (strain DSM 6194 / JCM 14653 / NBRC 101360 / PT) (Methanosaeta thermophila).